The sequence spans 1148 residues: Protocadherin-19 (1148 aa).

The signal sequence occupies residues 1–21 (MESLLLPVLLLLAILWTQAAA). Cadherin domains are found at residues 22 to 129 (LINL…APSF), 130 to 238 (PAAQ…NPVF), 239 to 346 (SEST…PPVI), 350 to 453 (SVNS…HPHF), 454 to 563 (SKPY…TPVI), and 569 to 672 (INGT…QESM). Topologically, residues 22–678 (LINLKYSVEE…QESMGSVNLS (657 aa)) are extracellular. The Ca(2+) site is built by E31, E32, D88, and D90. A disulfide bridge links C93 with C99. D121, N123, D124, N125, E140, D155, D157, E199, D212, D230, S231, N232, D233, N234, and E249 together coordinate Ca(2+). N261 is a glycosylation site (N-linked (GlcNAc...) asparagine). D264, D266, N270, D305, E307, D338, N340, D341, N342, E360, D375, D377, N381, D412, and E414 together coordinate Ca(2+). The N-linked (GlcNAc...) asparagine glycan is linked to N420. The Ca(2+) site is built by D427, D445, E446, N447, D448, N449, E464, D479, D481, N485, N522, E524, and D537. N485 is a glycosylation site (N-linked (GlcNAc...) asparagine). The N-linked (GlcNAc...) asparagine glycan is linked to N546. 5 residues coordinate Ca(2+): D555, V556, N557, D558, and N559. N570 carries N-linked (GlcNAc...) asparagine glycosylation. Positions 594, 596, 600, and 646 each coordinate Ca(2+). Residue N676 is glycosylated (N-linked (GlcNAc...) asparagine). The helical transmembrane segment at 679-699 (LIFIIALGSIAGILFVTMIFV) threads the bilayer. Topologically, residues 700 to 1148 (AIKCKRDNKE…GVKRLKDIVL (449 aa)) are cytoplasmic. Disordered stretches follow at residues 901-921 (GNSL…EHDV) and 1100-1148 (NVNN…DIVL). Composition is skewed to basic and acidic residues over residues 906–921 (DSGH…EHDV), 1109–1123 (SEAE…KVMH), and 1130–1148 (KEGR…DIVL).

As to quaternary structure, homodimer; antiparallel. As to expression, moderately expressed in all regions of the brain examined, with lowest levels found in the cerebellum. Moderate expression is also found in ovary, and low expression in all other tissues tested. Also detected in primary skin fibroblast.

It is found in the cell membrane. Functionally, calcium-dependent cell-adhesion protein. This is Protocadherin-19 (PCDH19) from Homo sapiens (Human).